A 155-amino-acid chain; its full sequence is SsrA-binding protein (155 aa).

Belongs to the SmpB family.

The protein localises to the cytoplasm. Functionally, required for rescue of stalled ribosomes mediated by trans-translation. Binds to transfer-messenger RNA (tmRNA), required for stable association of tmRNA with ribosomes. tmRNA and SmpB together mimic tRNA shape, replacing the anticodon stem-loop with SmpB. tmRNA is encoded by the ssrA gene; the 2 termini fold to resemble tRNA(Ala) and it encodes a 'tag peptide', a short internal open reading frame. During trans-translation Ala-aminoacylated tmRNA acts like a tRNA, entering the A-site of stalled ribosomes, displacing the stalled mRNA. The ribosome then switches to translate the ORF on the tmRNA; the nascent peptide is terminated with the 'tag peptide' encoded by the tmRNA and targeted for degradation. The ribosome is freed to recommence translation, which seems to be the essential function of trans-translation. This chain is SsrA-binding protein, found in Geobacillus thermodenitrificans (strain NG80-2).